The primary structure comprises 251 residues: uncharacterized protein (251 aa).

The signal sequence occupies residues 1-15 (MSAISSLVLIGWAMC). Asn-225 and Asn-242 each carry an N-linked (GlcNAc...) asparagine glycan.

This is an uncharacterized protein from Encephalitozoon cuniculi (strain GB-M1) (Microsporidian parasite).